The sequence spans 246 residues: Large ribosomal subunit protein uL3 (246 aa).

Disordered regions lie at residues 140 to 162 (SHRSIGSTGGRQDPGKTFKNKKM) and 214 to 246 (ADVPLPGKFRENGSAGASQIEAAPEAPASEENA). Residue glutamine 151 is modified to N5-methylglutamine. Residues 234–246 (EAAPEAPASEENA) are compositionally biased toward low complexity.

This sequence belongs to the universal ribosomal protein uL3 family. Part of the 50S ribosomal subunit. Forms a cluster with proteins L14 and L19. Post-translationally, methylated by PrmB.

In terms of biological role, one of the primary rRNA binding proteins, it binds directly near the 3'-end of the 23S rRNA, where it nucleates assembly of the 50S subunit. The polypeptide is Large ribosomal subunit protein uL3 (Methylorubrum extorquens (strain CM4 / NCIMB 13688) (Methylobacterium extorquens)).